Consider the following 76-residue polypeptide: Omega-conotoxin-like Ai6.3 (76 aa).

A signal peptide spans 1 to 22 (MKLTCLMIVAVLFLTAWTFVTA). Positions 23–50 (VPDSSNALENLYLKAHHEMNNPEDSELN) are excised as a propeptide. 3 cysteine pairs are disulfide-bonded: Cys-53/Cys-67, Cys-60/Cys-71, and Cys-66/Cys-75.

It belongs to the conotoxin O1 superfamily. Expressed by the venom duct.

The protein resides in the secreted. Functionally, omega-conotoxins act at presynaptic membranes, they bind and block voltage-gated calcium channels (Cav). The polypeptide is Omega-conotoxin-like Ai6.3 (Conus ammiralis (Admiral cone)).